The chain runs to 284 residues: Methylglyoxal reductase YeaE (284 aa).

This sequence belongs to the aldo/keto reductase family.

It carries out the reaction hydroxyacetone + NADP(+) = methylglyoxal + NADPH + H(+). It catalyses the reaction a primary alcohol + NADP(+) = an aldehyde + NADPH + H(+). In terms of biological role, aldo-keto reductase that contributes to cellular methylglyoxal detoxification by catalyzing the NADPH-dependent conversion of methylglyoxal to acetol. It also exhibits activity with glyoxal and probably plays a significant role in detoxification of glyoxal in vivo. Can also use aromatic aldehydes such as 4-nitrobenzaldehyde, 3-nitrobenzaldehyde and benzaldehyde, and phenylglyoxal. The polypeptide is Methylglyoxal reductase YeaE (yeaE) (Escherichia coli (strain K12)).